The primary structure comprises 62 residues: Large ribosomal subunit protein bL28 (62 aa).

The protein belongs to the bacterial ribosomal protein bL28 family.

The chain is Large ribosomal subunit protein bL28 from Staphylococcus epidermidis (strain ATCC 12228 / FDA PCI 1200).